Reading from the N-terminus, the 741-residue chain is MLSLKKYLTEGLLQFTILLSLIGVRVDVDTYLTSQLPPLREIILGPSSAYTQTQFHNLRNTLDGYGIHPKSIDLDNYFTARRLLSQVRALDRFQVPTTEVNAWLVHRDPEGSVSGSQPNSGLALESSSGLQDVTGPDNGVRESETEQGFGEDLEDLGAVAPPVSGDLTKEDIDLIDILWRQDIDLGAGREVFDYSHRQKEQDVDKELQDGREREDTWSGEGAEALARDLLVDGETGESFPAQFPADVSSIPEAVPSESESPALQNSLLSPLLTGTESPFDLEQQWQDLMSIMEMQAMEVNTSASEILYNAPPGDPLSTNYSLAPNTPINQNVSLHQASLGGCSQDFSLFSPEVESLPVASSSTLLPLVPSNSTSLNSTFGSTNLAGLFFPSQLNGTANDTSGPELPDPLGGLLDEAMLDEISLMDLAIEEGFNPVQASQLEEEFDSDSGLSLDSSHSPSSLSSSEGSSSSSSSSSSSSASSSASSSFSEEGAVGYSSDSETLDLEEAEGAVGYQPEYSKFCRMSYQDPSQLSCLPYLEHVGHNHTYNMAPSALDSADLPPPSTLKKGSKEKQADFLDKQMSRDEHRARAMKIPFTNDKIINLPVEEFNELLSKYQLSEAQLSLIRDIRRRGKNKMAAQNCRKRKLDTILNLERDVEDLQRDKARLLREKVEFLRSLRQMKQKVQSLYQEVFGRLRDEHGRPYSPSQYALQYAGDGSVLLIPRTMADQQARRQERKPKDRRK.

Residues 7-24 form a helical; Signal-anchor for type II membrane protein membrane-spanning segment; the sequence is YLTEGLLQFTILLSLIGV. Disordered stretches follow at residues 108–148 and 198–220; these read DPEG…TEQG and QKEQDVDKELQDGREREDTWSGE. The span at 113–131 shows a compositional bias: polar residues; it reads VSGSQPNSGLALESSSGLQ. Residues 191–199 form a cholesterol recognition/amino acid consensus (CRAC) region region; sequence VFDYSHRQK. Positions 198–216 are enriched in basic and acidic residues; that stretch reads QKEQDVDKELQDGREREDT. Residues N319 and N331 are each glycosylated (N-linked (GlcNAc...) asparagine). The segment at 350–354 is CPD; the sequence is SPEVE. An N-linked (GlcNAc...) asparagine glycan is attached at N394. Disordered stretches follow at residues 441–501 and 551–582; these read EEEF…DSET and SALDSADLPPPSTLKKGSKEKQADFLDKQMSR. The short motif at 447–451 is the Destruction motif element; it reads DSGLS. Positions 447–492 are enriched in low complexity; the sequence is DSGLSLDSSHSPSSLSSSEGSSSSSSSSSSSSASSSASSSFSEEGA. S497 carries the phosphoserine; by CK2 modification. Residues 567–582 are compositionally biased toward basic and acidic residues; sequence GSKEKQADFLDKQMSR. At S568 the chain carries Phosphoserine. A bZIP domain is found at 623–686; sequence LIRDIRRRGK…RQMKQKVQSL (64 aa). The segment at 625–644 is basic motif; it reads RDIRRRGKNKMAAQNCRKRK. Positions 651–665 are leucine-zipper; sequence LERDVEDLQRDKARL. The interval 722-741 is disordered; the sequence is RTMADQQARRQERKPKDRRK. A Nuclear localization signal motif is present at residues 730–737; sequence RRQERKPK. The span at 732–741 shows a compositional bias: basic residues; the sequence is QERKPKDRRK.

This sequence belongs to the bZIP family. CNC subfamily. As to quaternary structure, interacts with KEAP1. In terms of assembly, interacts (via CPD region) with FBXW7; leading to its ubiquitination and degradation. Interacts with SYVN1/HRD1; leading to its ubiquitination and degradation. Interacts (when ubiquitinated) with DDI2; leading to its cleavage. Interacts (via the bZIP domain) with small MAF protein (MAFF, MAFG or MAFK); required for binding to antioxidant response elements (AREs) on DNA. Interacts (via Destruction motif) with BTRC; leading to its ubiquitination and degradation. Interacts with CEBPB; the heterodimer represses expression of DSPP during odontoblast differentiation. Interacts with MOTS-c, a peptide produced by the mitochondrially encoded 12S rRNA MT-RNR1. Post-translationally, cleaved at Leu-104 by the aspartyl protease DDI2 following retrotranslocation, releasing the protein from the endoplasmic reticulum membrane and forming the transcription factor NRF1 that translocates into the nucleus. Ubiquitination is prerequisite for cleavage by aspartyl protease DDI2. N-glycosylated in normal conditions, when it has a single-pass type II membrane protein topology, with the DNA-binding domain facing the endoplasmic reticulum lumen. Deglycosylated during retrotranslocation to the cytosolic side of the membrane, to have a single-pass type III membrane protein topology with the major part of the protein facing the cytosol. In terms of processing, ubiquitinated by the SCF(FBXW7) complex and SYVN1/HRD1, leading to its degradation by the proteasome. Ubiquitinated during retrotranslocation to the cytosolic side of the membrane: ubiquitination does not lead to degradation and is required for processing by the aspartyl protease DDI2 and subsequent release from the endoplasmic reticulum membrane. Post-translationally, phosphorylation by CK2 at Ser-497 inhibits transcription factor activity, possibly by affecting DNA-binding activity. Phosphorylation at Ser-568 is required for interaction with CEBPB. Ubiquitinated by the SCF(BTRC) complex in the nucleus, leading to its degradation by the proteasome. Isoform 1: Widely expressed including kidney, brown fat, white fat, large intestine, small intestine, stomach, lung, brain and liver. Isoform 1: Expressed in mouse embryonic fibroblasts (MEF). Isoform 2: Widely expressed including kidney, brown fat, white fat, large intestine, small intestine, stomach, lung, brain and liver. Isoform 2: levels in white fat, lung and liver are increased compared to isoform 1 (at protein level). Isoform 2: levels are elevated in brown fat and brain, but are reduced in liver compared to isoform 1 levels. Isoform 2: Expressed in mouse embryonic fibroblasts (MEF).

Its subcellular location is the endoplasmic reticulum membrane. The protein localises to the nucleus. It is found in the cytoplasm. Functionally, endoplasmic reticulum membrane sensor that translocates into the nucleus in response to various stresses to act as a transcription factor. Constitutes a precursor of the transcription factor NRF1. Able to detect various cellular stresses, such as cholesterol excess, oxidative stress or proteasome inhibition. In response to stress, it is released from the endoplasmic reticulum membrane following cleavage by the protease DDI2 and translocates into the nucleus to form the transcription factor NRF1. Acts as a key sensor of cholesterol excess: in excess cholesterol conditions, the endoplasmic reticulum membrane form of the protein directly binds cholesterol via its CRAC motif, preventing cleavage and release of the transcription factor NRF1, thereby allowing expression of genes promoting cholesterol removal, such as CD36. Involved in proteasome homeostasis: in response to proteasome inhibition, it is released from the endoplasmic reticulum membrane, translocates to the nucleus and activates expression of genes encoding proteasome subunits. Its function is as follows. CNC-type bZIP family transcription factor that translocates to the nucleus and regulates expression of target genes in response to various stresses. Heterodimerizes with small-Maf proteins (MAFF, MAFG or MAFK) and binds DNA motifs including the antioxidant response elements (AREs), which regulate expression of genes involved in oxidative stress response. Activates or represses expression of target genes, depending on the context. Plays a key role in cholesterol homeostasis by acting as a sensor of cholesterol excess: in low cholesterol conditions, translocates into the nucleus and represses expression of genes involved in defense against cholesterol excess, such as CD36. In excess cholesterol conditions, the endoplasmic reticulum membrane form of the protein directly binds cholesterol via its CRAC motif, preventing cleavage and release of the transcription factor NRF1, thereby allowing expression of genes promoting cholesterol removal. Critical for redox balance in response to oxidative stress: acts by binding the AREs motifs on promoters and mediating activation of oxidative stress response genes, such as GCLC, GCLM, GSS, MT1 and MT2. Plays an essential role during fetal liver hematopoiesis: probably has a protective function against oxidative stress and is involved in lipid homeostasis in the liver. Involved in proteasome homeostasis: in response to proteasome inhibition, mediates the 'bounce-back' of proteasome subunits by translocating into the nucleus and activating expression of genes encoding proteasome subunits. Also involved in regulating glucose flux. Together with CEBPB; represses expression of DSPP during odontoblast differentiation. In response to ascorbic acid induction, activates expression of SP7/Osterix in osteoblasts. In terms of biological role, transcription factor that binds the antioxidant response elements (ARE) consensus sequence on promoters and activates their expression. Transcription factor that binds the extended kappa 3 site of the TNF-alpha promoter after Fc gamma RIII stimulation and participates in the induction of this cytokine. The protein is Endoplasmic reticulum membrane sensor NFE2L1 of Mus musculus (Mouse).